Reading from the N-terminus, the 176-residue chain is NAD(P)H-quinone oxidoreductase subunit 6, chloroplastic (176 aa).

A run of 5 helical transmembrane segments spans residues 10-30, 32-52, 61-81, 92-112, and 152-172; these read FLLVFLGSGLILGSLGVVLLT, PIYSAFSLGLVLVCISLFYIL, AQLLIYVGAINILILFAVMFM, LWTVGDGITSLVCTSILVSLM, and FFLPFELISIILLVALIGAIA.

Belongs to the complex I subunit 6 family. As to quaternary structure, NDH is composed of at least 16 different subunits, 5 of which are encoded in the nucleus.

Its subcellular location is the plastid. It localises to the chloroplast thylakoid membrane. It carries out the reaction a plastoquinone + NADH + (n+1) H(+)(in) = a plastoquinol + NAD(+) + n H(+)(out). It catalyses the reaction a plastoquinone + NADPH + (n+1) H(+)(in) = a plastoquinol + NADP(+) + n H(+)(out). NDH shuttles electrons from NAD(P)H:plastoquinone, via FMN and iron-sulfur (Fe-S) centers, to quinones in the photosynthetic chain and possibly in a chloroplast respiratory chain. The immediate electron acceptor for the enzyme in this species is believed to be plastoquinone. Couples the redox reaction to proton translocation, and thus conserves the redox energy in a proton gradient. This chain is NAD(P)H-quinone oxidoreductase subunit 6, chloroplastic (ndhG), found in Eucalyptus globulus subsp. globulus (Tasmanian blue gum).